A 369-amino-acid chain; its full sequence is 3-dehydroquinate synthase (369 aa).

NAD(+)-binding positions include 75 to 80 (DGEEHK), 109 to 113 (GVIGD), 133 to 134 (TT), lysine 146, lysine 155, and 173 to 176 (TLKT). Residues glutamate 188, histidine 251, and histidine 268 each coordinate Zn(2+).

The protein belongs to the sugar phosphate cyclases superfamily. Dehydroquinate synthase family. Requires Co(2+) as cofactor. Zn(2+) serves as cofactor. It depends on NAD(+) as a cofactor.

Its subcellular location is the cytoplasm. The catalysed reaction is 7-phospho-2-dehydro-3-deoxy-D-arabino-heptonate = 3-dehydroquinate + phosphate. The protein operates within metabolic intermediate biosynthesis; chorismate biosynthesis; chorismate from D-erythrose 4-phosphate and phosphoenolpyruvate: step 2/7. Its function is as follows. Catalyzes the conversion of 3-deoxy-D-arabino-heptulosonate 7-phosphate (DAHP) to dehydroquinate (DHQ). This is 3-dehydroquinate synthase from Legionella pneumophila (strain Paris).